Here is a 364-residue protein sequence, read N- to C-terminus: MTVPTTIRLPSKQTVILEGDDLRLRIDDNAPLPVLRPDEVLVRTMAVAINPCDYKMHERFPSPGAVDGCDFSGVILAIGAGVPSLGVSFQIGDRVCGAVHGSNPIRHDSGSFAEYIASEAEFTLKIPDSMSFEEAAALGGTGLATLGMALFRTLELPGTPEEPAQKPLTVLVHGGSSSVGTMAMQLLRLVGHIPITTCSPRNFALAKEYGAEEIFDYHEPDCGQKIKAYTRNTLRYVLDPFTDAKSIALCCGAMGRAGGRYACLEMYPDYLVEKRTLRVGFVMGPALLGHRLELDYGYERAADPEMRQFGIRWYRSIQWLLSKGQLKPHPLRVLPGRFDAILQGIEMLKSKSVSGEKLVVSIGM.

Cysteine 52–lysine 55 provides a ligand contact to NADP(+). Threonine 141–methionine 148 is a substrate binding site. Residues serine 176–valine 179, serine 199–asparagine 202, tyrosine 217, and leucine 264–glutamate 265 each bind NADP(+). Glycine 284–leucine 288 contributes to the substrate binding site. NADP(+) is bound at residue valine 353–serine 354.

This sequence belongs to the zinc-containing alcohol dehydrogenase family. Monomer.

Its pathway is mycotoxin biosynthesis. Its function is as follows. Trans-enoyl reductase; part of the gene cluster that mediates the biosynthesis of a family of the mycotoxins cytochalasins E and K. The hybrid PKS-NRPS synthetase ccsA and the enoyl reductase ccsC are responsible for fusion of phenylalanine with an octaketide backbone and subsequent release of the stable tetramic acid precursor. The polyketide synthase module (PKS) of the PKS-NRPS ccsA is responsible for the synthesis of the octaketide backbone. The downstream nonribosomal peptide synthetase (NRPS) amidates the carboxyl end of the octaketide with a phenylalanine. A reductase-like domain (R) at the C-terminus catalyzes the reductive release of the polyketide-amino acid intermediate. Because ccsA lacks a designated enoylreductase (ER) domain, the required activity is provided the enoyl reductase ccsC. Upon formation of the 11-membered carbocycle-fused perhydroisoindolone intermediate, a number of oxidative steps are required to afford the final cytochalasin E and K, including two hydroxylations at C17 and C18, one alcohol oxidation at C17, one epoxidation at C6 and C7 and two Baeyer-Villiger oxidations. The oxidative modification at C17, C18 and the C6-C7 epoxidation are likely to be catalyzed by the two cytochrome P450 oxygenases ccsD and ccsG. CcsD may be responsible for the epoxidation of the C6-C7 double bond. CcsG may be responsible for the successive oxidative modifications at C17 and C18. The double Baeyer-Villiger oxidations of ketocytochalasin to precytochalasin and cytochalasin Z(16) are among the final steps leading to cytochalasin E and K and are catalyzed by ccsB. The first oxygen insertion step follows that of the classic BVMO mechanism, generating the ester precytochalasin. Release of precytochalasin into an aqueous environment can generate the shunt product iso-precytochalasin through spontaneous isomerization. Alternatively, precytochalasin can undergo further oxidation by ccsB to yield the in-line carbonate-containing cytochalasin Z(16). Cytochalasin Z(16) is a precursor to cytochalasin E and cytochalasin K, whereas iso-precytochalasin is a precursor to cytochalasin Z(17) and rosellichalasin. The hydrolyase ccsE may catalyze hydrolysis of epoxide bond in cytochalasin E to afford cytochalasin K. The function of ccsF has not been assigned but it may play a role in post-PKS-NRPS biosynthetic step, resistance or transport of cytochalasins and related PKS-NRPS products. The sequence is that of Trans-enoyl reductase ccsC from Aspergillus clavatus (strain ATCC 1007 / CBS 513.65 / DSM 816 / NCTC 3887 / NRRL 1 / QM 1276 / 107).